The primary structure comprises 92 residues: uncharacterized protein (92 aa).

Residues 25–83 form the HTH cro/C1-type domain; that stretch reads LEEKLKQEKIDRKYLAQVTNIPYTTVSRIMRAEANREFNPEIDTILKIAKYFNCTMDEV. Positions 36–55 form a DNA-binding region, H-T-H motif; sequence RKYLAQVTNIPYTTVSRIMR.

This is an uncharacterized protein from Rickettsia prowazekii (strain Madrid E).